Consider the following 295-residue polypeptide: Ribosomal protein L11 methyltransferase (295 aa).

Positions 145, 166, 188, and 230 each coordinate S-adenosyl-L-methionine.

It belongs to the methyltransferase superfamily. PrmA family.

Its subcellular location is the cytoplasm. The catalysed reaction is L-lysyl-[protein] + 3 S-adenosyl-L-methionine = N(6),N(6),N(6)-trimethyl-L-lysyl-[protein] + 3 S-adenosyl-L-homocysteine + 3 H(+). Functionally, methylates ribosomal protein L11. The protein is Ribosomal protein L11 methyltransferase of Shewanella amazonensis (strain ATCC BAA-1098 / SB2B).